Reading from the N-terminus, the 140-residue chain is Acyl carrier protein 1, chloroplastic (140 aa).

The transit peptide at 1–56 (MASAAAGASICIKSASFSPLAPGRISSLRSVSLPVSRKSFPSLKSSKSSFALRVSC) directs the protein to the chloroplast. Residues 60–135 (PETVAKVCGI…DAADLIEKLM (76 aa)) enclose the Carrier domain. Ser-95 carries the O-(pantetheine 4'-phosphoryl)serine modification.

This sequence belongs to the acyl carrier protein (ACP) family. 4'-phosphopantetheine is transferred from CoA to a specific serine of apo-ACP by acpS. This modification is essential for activity because fatty acids are bound in thioester linkage to the sulfhydryl of the prosthetic group.

The protein localises to the plastid. The protein resides in the chloroplast. It functions in the pathway lipid metabolism; fatty acid biosynthesis. Functionally, carrier of the growing fatty acid chain in fatty acid biosynthesis. The polypeptide is Acyl carrier protein 1, chloroplastic (ACL1.1) (Cuphea lanceolata (Cigar flower)).